Reading from the N-terminus, the 436-residue chain is Peptidase B (436 aa).

The Mn(2+) site is built by Lys-201 and Asp-206. Lys-213 is an active-site residue. 3 residues coordinate Mn(2+): Asp-224, Asp-283, and Glu-285. The active site involves Arg-287.

This sequence belongs to the peptidase M17 family. In terms of assembly, homohexamer. Requires Mn(2+) as cofactor.

The protein resides in the cytoplasm. It catalyses the reaction Release of an N-terminal amino acid, Xaa, from a peptide or arylamide. Xaa is preferably Glu or Asp but may be other amino acids, including Leu, Met, His, Cys and Gln.. Functionally, probably plays an important role in intracellular peptide degradation. The protein is Peptidase B of Pectobacterium atrosepticum (strain SCRI 1043 / ATCC BAA-672) (Erwinia carotovora subsp. atroseptica).